A 144-amino-acid chain; its full sequence is Large ribosomal subunit protein uL15 (144 aa).

The tract at residues 1–25 is disordered; the sequence is MFLNTIGARDGSRPEKKRVGRGIGS.

The protein belongs to the universal ribosomal protein uL15 family. As to quaternary structure, part of the 50S ribosomal subunit.

Functionally, binds to the 23S rRNA. The sequence is that of Large ribosomal subunit protein uL15 from Methylococcus capsulatus (strain ATCC 33009 / NCIMB 11132 / Bath).